Here is a 166-residue protein sequence, read N- to C-terminus: Probable histone deacetylase complex subunit SAP18 (166 aa).

Residues 143-166 (GRRFNNREQGDRFDHRQRQRSPIR) are disordered. The segment covering 147–158 (NNREQGDRFDHR) has biased composition (basic and acidic residues).

The protein belongs to the SAP18 family. In terms of assembly, interacts with SIN3 and histone deacetylase.

In terms of biological role, acts in transcription repression. Involved in the tethering of the SIN3 complex to core histone proteins. The protein is Probable histone deacetylase complex subunit SAP18 of Caenorhabditis elegans.